A 255-amino-acid chain; its full sequence is 5'-nucleotidase SurE (255 aa).

Positions 8, 9, 40, and 93 each coordinate a divalent metal cation.

Belongs to the SurE nucleotidase family. A divalent metal cation serves as cofactor.

It is found in the cytoplasm. It catalyses the reaction a ribonucleoside 5'-phosphate + H2O = a ribonucleoside + phosphate. Its function is as follows. Nucleotidase that shows phosphatase activity on nucleoside 5'-monophosphates. The sequence is that of 5'-nucleotidase SurE from Azorhizobium caulinodans (strain ATCC 43989 / DSM 5975 / JCM 20966 / LMG 6465 / NBRC 14845 / NCIMB 13405 / ORS 571).